Consider the following 126-residue polypeptide: MKSVLKIRMSAHDAHYGGGLVDGARMLQLFGDVATELLIMNDGDEGLFKAYDMVEFMAPVFAGDYIEVEGSITEQGNTSRKMIFEARKVIVPRTDINDSACDVLETPIVVCRASGTCVVPKDKQRK.

It belongs to the KAL family. In terms of assembly, homohexamer.

It catalyses the reaction (3S)-3-aminobutanoyl-CoA = (2E)-butenoyl-CoA + NH4(+). It functions in the pathway amino-acid degradation; L-lysine degradation via acetate pathway. Functionally, involved in the anaerobic fermentation of lysine. Catalyzes the deamination of L-3-aminobutyryl-CoA to produce crotonoyl-CoA. This Acetoanaerobium sticklandii (strain ATCC 12662 / DSM 519 / JCM 1433 / CCUG 9281 / NCIMB 10654 / HF) (Clostridium sticklandii) protein is 3-aminobutyryl-CoA ammonia lyase.